The primary structure comprises 486 residues: Maternal protein exuperantia (486 aa).

2 disordered regions span residues 202–233 (NARVDNDNEADSNSSSADKHVKNGLQKERDEF) and 386–477 (STIR…ISLP). A compositionally biased stretch (basic and acidic residues) spans 218 to 233 (ADKHVKNGLQKERDEF). The span at 387–397 (TIRRRNKRNTP) shows a compositional bias: basic residues. Polar residues-rich tracts occupy residues 420–437 (KSQSVSSVPDSTTKTPSP) and 464–476 (SALNNTAPASISL).

In terms of biological role, ensures the proper localization of the mRNA of the bicoid gene to the anterior regions of the oocyte thus playing a fundamental role in the establishment of the polarity of the oocyte. May bind the bcd mRNA. This is Maternal protein exuperantia (exu) from Drosophila virilis (Fruit fly).